Reading from the N-terminus, the 70-residue chain is Large ribosomal subunit protein bL31 (70 aa).

The Zn(2+) site is built by Cys-16, Cys-18, Cys-37, and Cys-40.

Belongs to the bacterial ribosomal protein bL31 family. Type A subfamily. Part of the 50S ribosomal subunit. The cofactor is Zn(2+).

In terms of biological role, binds the 23S rRNA. In Alteromonas mediterranea (strain DSM 17117 / CIP 110805 / LMG 28347 / Deep ecotype), this protein is Large ribosomal subunit protein bL31.